The chain runs to 417 residues: MRYLWLFLIHTIGLFATDKTLDIIKTIQKLPKIEVRYSIDNDANYALKLHEVLANDLKTSQHFDVSQNKDQGAINYAELKDKKVHLVALVSVAVENGNKISRLKLYDVDTGTLKKTFDYPIVSLDLYPFAAHNMAIVVNDYLKAPSIAWMKRLIVFSKYIGPGITNIALADYTMRYQKEIIKNNRLNIFPKWANAEQTEFYYTQYGERTPMILKYNIQKATHENIASSQGMAVVSSVSSDGSKILMSLAPDGQPDVYLYDTHKKTKTKITRYPGIDVSGVFLEDDKSMAFVSDRSGYPNIYMKKLGLKESAEQLLYEGRSNESIDAYKDSIVYVSRENLNEFGKTVFNLNLITLNSKYIRRLTVNGSNQMPRFSTDGRNIMYIKKTPQEYAMGLILLDYNQSFLFPLKNVKIQAFDW.

Residues Met1–Ala16 form the signal peptide.

The protein belongs to the TolB family. As to quaternary structure, the Tol-Pal system is composed of five core proteins: the inner membrane proteins TolA, TolQ and TolR, the periplasmic protein TolB and the outer membrane protein Pal. They form a network linking the inner and outer membranes and the peptidoglycan layer.

Its subcellular location is the periplasm. In terms of biological role, part of the Tol-Pal system, which plays a role in outer membrane invagination during cell division and is important for maintaining outer membrane integrity. In Helicobacter pylori (strain ATCC 700392 / 26695) (Campylobacter pylori), this protein is Tol-Pal system protein TolB.